The chain runs to 120 residues: UPF0715 membrane protein YwlA (120 aa).

4 helical membrane passes run 3–23 (YNYTVLLSAFTMSVLYSVIYI), 26–46 (FIIAALITMAFYFLFPYLIFA), 63–83 (LYLLYYLAAAFIANAIIFGML), and 95–115 (AFYLFAVLTALIYWIWDSVLL).

Belongs to the UPF0715 family.

Its subcellular location is the cell membrane. The protein is UPF0715 membrane protein YwlA (ywlA) of Bacillus subtilis (strain 168).